The primary structure comprises 137 residues: Glutaredoxin-C9 (137 aa).

The Glutaredoxin domain occupies G32–W136. C52 and C55 are joined by a disulfide. The Responsive for interaction with TGA factors motif lies at A134–L137.

This sequence belongs to the glutaredoxin family. CC-type subfamily. Interacts with TGA2 and TGA6.

It is found in the cytoplasm. The protein resides in the nucleus. Has a glutathione-disulfide oxidoreductase activity in the presence of NADPH and glutathione reductase. Reduces low molecular weight disulfides and proteins. The chain is Glutaredoxin-C9 (GRXC9) from Arabidopsis thaliana (Mouse-ear cress).